We begin with the raw amino-acid sequence, 58 residues long: Large ribosomal subunit protein uL30 (58 aa).

The protein belongs to the universal ribosomal protein uL30 family. As to quaternary structure, part of the 50S ribosomal subunit.

This Vibrio vulnificus (strain CMCP6) protein is Large ribosomal subunit protein uL30.